Consider the following 568-residue polypeptide: Kinetochore protein NDC80 homolog (568 aa).

The tract at residues 1–59 is disordered; that stretch reads MRGGAAGKRRTTVGFGGAPPPPPPSIEQQRHLFNSRDSDASFASSRPSSIGLGGRGASD. A compositionally biased stretch (basic and acidic residues) spans 28-39; sequence QQRHLFNSRDSD. Low complexity predominate over residues 40–49; the sequence is ASFASSRPSS. 2 coiled-coil regions span residues 241–334 and 433–469; these read KESL…AEVA and IESK…TKCD.

The protein belongs to the NDC80/HEC1 family. Component of the NDC80 complex, which consists of NDC80, NUF2, SPC24 and SPC25.

Its subcellular location is the chromosome. The protein localises to the centromere. In terms of biological role, acts as a component of the essential kinetochore-associated NDC80 complex, which is required for chromosome segregation and spindle checkpoint activity to ensure proper cell division. This Arabidopsis thaliana (Mouse-ear cress) protein is Kinetochore protein NDC80 homolog.